The sequence spans 18141 residues: Titin (18141 aa).

Low complexity predominate over residues 1–31 (MQRQNPNPYQQQNQQHQQVQQFSSQEYSHSS). A disordered region spans residues 1-69 (MQRQNPNPYQ…QHHGGSIGGA (69 aa)). Residues 32–47 (QEQHQEQRISRTEQHV) are compositionally biased toward basic and acidic residues. The segment covering 48 to 62 (QRSQVTTQRQVQQHH) has biased composition (low complexity). 17 consecutive Ig-like domains span residues 86–177 (PPVF…VYIQ), 255–343 (PQIS…AVLA), 372–461 (PAFV…AQLN), 471–559 (PQFV…ARLY), 618–708 (PQFI…AILS), 751–842 (PQFI…SSIR), 890–981 (PQFK…AQLT), 1024–1115 (PRFL…ATMI), 1158–1249 (PVFV…ACVR), 1291–1381 (PQFT…CSVR), 1424–1515 (PRFL…VELQ), 1558–1643 (PVFT…EAIT), 1691–1781 (PVFT…ASLI), 1824–1917 (PVFV…LNVT), 1958–2050 (PQFG…VNVT), 2089–2180 (PIFL…CNVR), and 2222–2313 (PHFT…TNLR). Residues 236-266 (EQDSQLSQELDRNQGPAQAPQISQKPRSSKL) are disordered. Cys-393 and Cys-445 form a disulfide bridge. Intrachain disulfides connect Cys-1312-Cys-1365, Cys-1446-Cys-1499, and Cys-1579-Cys-1632. An intrachain disulfide couples Cys-1846 to Cys-1899. Cys-2111 and Cys-2164 form a disulfide bridge. A compositionally biased stretch (basic and acidic residues) spans 2338 to 2347 (STAPHQRQEP). The segment at 2338–2357 (STAPHQRQEPETPGTRQRPV) is disordered. Ig-like domains follow at residues 2356 to 2449 (PVFT…MRVV), 2488 to 2581 (PIFT…MKVK), and 2622 to 2715 (PVFT…LKIE). The disordered stretch occupies residues 2731–2750 (PRIGELEAPKEGRPEAPEPT). Positions 2734-2746 (GELEAPKEGRPEA) are enriched in basic and acidic residues. Ig-like domains are found at residues 2754–2844 (PVFI…GTLK), 2891–2983 (PPVW…TTIF), 3029–3116 (PRFT…AEIS), 3130–3221 (PRFT…TTLN), 3263–3354 (PKFI…ASLK), 3401–3494 (PVFT…MKIQ), 3539–3625 (PEFI…ATVS), 3676–3767 (PKFT…AKVT), and 3811–3901 (PKFT…ATVS). A disulfide bridge links Cys-2775 with Cys-2828. A disulfide bridge links Cys-3152 with Cys-3205. 3 disulfide bridges follow: Cys-3560–Cys-3613, Cys-3698–Cys-3751, and Cys-3832–Cys-3885. One copy of the TPR 1 repeat lies at 3910-3944 (LQNQVPRGMKRSDALTQMEATIKKYTSEVHLTEDD). 2 consecutive Ig-like domains span residues 3954–4047 (PRFV…IKVS) and 4092–4181 (PVFV…LKVV). A disulfide bridge links Cys-3976 with Cys-4029. A coiled-coil region spans residues 4204–4229 (AAYQKERQENELEKVFDERKQVLSEQ). 2 disordered regions span residues 4226 to 4254 (LSEQSSHTLKGVEHLKPKQYKPPTPDWQQ) and 4299 to 4336 (SSQAKGMAQSYEENLQEKTSTTEVQAAPPKGIAQPSES). Positions 4309–4322 (YEENLQEKTSTTEV) are enriched in polar residues. 4 Ig-like domains span residues 4394–4482 (PVFT…ANLV), 4497–4585 (PSFV…GDCI), 4604–4692 (PHIV…AQLK), and 4703–4791 (PTIT…AKLT). A TPR 2 repeat occupies 4403 to 4438 (CRVFENEQAKFEVEFEGEPNPTVKWYRESFPIQNSP). Cys-4625 and Cys-4676 are joined by a disulfide. 8 disordered regions span residues 4803 to 4891 (RTID…DKGV), 5318 to 5368 (DELV…QPEP), 5413 to 5648 (RVIP…EVDA), 5667 to 5701 (IKKTKRPKSTKEVTEELFEEQPEEEISPEEEVPQK), 5718 to 5748 (KKTKKPKLTQQVTEEETPHEEIIKESEEVVQ), 5775 to 5982 (KEEE…QRLL), 6034 to 6350 (KRVK…MPVD), and 6364 to 6393 (EEEVVPTEETPEAKQKAHKKRTKRLKEASV). The span at 4822 to 4841 (PESPHAFQPGQQPGQQFGQF) shows a compositional bias: low complexity. Positions 4852 to 4863 (GRSRQKKPKVRS) are enriched in basic residues. 5 stretches are compositionally biased toward basic and acidic residues: residues 5344 to 5357 (QPQEKTFEEAHDEL), 5436 to 5447 (RPKEAVKAEEIQ), 5541 to 5552 (QKPDEQKQELPK), 5591 to 5621 (IEEKLDVAPTKTYEKAVDVLPDEPKVEEKPE), and 5633 to 5645 (PKSEPTEEVHPDE). The TPR 3 repeat unit spans residues 5575-5613 (PVLWERKKKKPQPQDVIEEKLDVAPTKTYEKAVDVLPDE). The span at 5681-5697 (EELFEEQPEEEISPEEE) shows a compositional bias: acidic residues. 2 stretches are compositionally biased toward acidic residues: residues 5779–5792 (IPTEETVEEEETAE) and 5818–5860 (DVEE…QDEI). Basic residues predominate over residues 5865–5874 (RKVKKAKKPK). Residues 5883 to 5904 (EIEEDQPEEEVLQEEIIGEQEE) are compositionally biased toward acidic residues. Residues 5910-5920 (RKVKSIKKPKK) are compositionally biased toward basic residues. Positions 5921–5971 (VVTEKTVDQTEQPEKPEESQAEEVKETVTEEPKKPKPAPEEAKVEQVEKIS) are enriched in basic and acidic residues. Positions 6034-6043 (KRVKKKKPKT) are enriched in basic residues. A compositionally biased stretch (acidic residues) spans 6049–6079 (ESTEEPAEETEEFEEEATQPEEVQPVEEIPE). Composition is skewed to basic and acidic residues over residues 6081–6092 (PQVKEVADERKT), 6099–6133 (RKEEIIEKVEEVALKRVTRPKKELPQEATIEEVRL), 6141–6169 (IKPEEVKLEEVDLQHVEKKEDEIVQEEKR), 6195–6209 (EAEHIELEKQPKPEE), 6217–6234 (KRGEKKQPVEEVLEEKKW), and 6259–6268 (PIEEQQKPEK). The span at 6281 to 6290 (PESEEEELEL) shows a compositional bias: acidic residues. A compositionally biased stretch (basic and acidic residues) spans 6291 to 6306 (EPLKLPEDKKPKEPKA). The span at 6307-6318 (KKEKKKKPKLKK) shows a compositional bias: basic residues. Acidic residues-rich tracts occupy residues 6325–6349 (EVSEEVAEPFDEPIAEEDEVEEMPV) and 6364–6373 (EEEVVPTEET). 7 Ig-like domains span residues 6536–6624 (PRIT…TNII), 6633–6728 (PQFT…NILS), 6741–6830 (PTVT…VVVS), 6841–6929 (PRFI…ATVN), 6942–7034 (PRFV…VKIQ), 7066–7151 (PKII…VAVT), and 7189–7279 (PSLL…FDIS). The cysteines at positions 6557 and 6608 are disulfide-linked. Cysteines 6964 and 7016 form a disulfide. Residues 7621–7663 (KIQVQTKQIAQMNTKIKKHKKHKQQEQEVSETTIQCEQKETLA) adopt a coiled-coil conformation. Disordered regions lie at residues 7773 to 7793 (AKTAESSKELPSKIPKSVKAQ), 9414 to 9440 (EEDDKQPETTVTVEEVPYEEEKPEEIQ), 9485 to 9510 (EEDDKQPETTVTVEEVPYEEEKPEEI), 9556 to 9582 (EEDDKQPETTVTVEEVPYEEEKPEEIQ), 9627 to 9652 (EEDDKQPETTVTVEEVPYEEEKPEEI), 9698 to 9724 (EEDDKQPETTVTVEEVPYEEEKPEEIQ), 9769 to 9796 (EEDDKQPETTVTVEEVPYEEEKPEEIQE), 9838 to 9865 (TAEEDDKQPETTVTVEEVPYEEEKPEEI), 9911 to 9937 (EEDDKQPETTVTVEEVPYEEEKPEEIQ), 9982 to 10008 (EEDDKQPETTVTVEEVPYEEEKPEEIQ), 10053 to 10080 (EEDDKQPETTVTVEEVPYEEEKPEEIQE), 10125 to 10149 (ENDKQPETTVTVEEVPYEEEKPEEI), 10195 to 10220 (EEDDKQPKTTVTVEEVPYEEEKPEEI), 10266 to 10291 (EEDDKQPETTVTVEEVPYEEEKPEEI), 10337 to 10364 (EEDDKQPETTVTVEEVPYEEEKPEEIQE), 10408 to 10433 (EEDDKQPETTVTVEEVPYEEEKPEEI), 10479 to 10504 (EEDDKQPETTVTVEEVPYEEEKPEEI), 10550 to 10576 (EEDDKQPETTVTVEEVPYEEEKPEEIQ), 10621 to 10648 (EEDDKQPETTVTVEEVPYEEEKPEEIQE), 10692 to 10717 (EEDDKQPETTVTVEEVPYEEEKPEEI), 10763 to 10788 (EEDDKQPETTVTVEEVPYEEEKPEEI), 10834 to 10860 (EEDDKQPETTVTVEEVPYEEEKPEEIQ), 10905 to 10932 (EEDDKQPETTVTVEEVPYEEEKPEEIQE), 11047 to 11073 (EEDDKQPETTVTVEEVPYEEEKPEEIQ), 11118 to 11143 (EEDDKQPETTVTVEEVPYEEEKPEEI), 11189 to 11216 (EEDDKQPETTVTVEEVPYEEEKPEEIQE), 11260 to 11286 (EEDDKQPETTVTVEEVPYEEEKPEEIQ), 11679 to 11703 (EELDENKKPKKKTTKTRTFKKRGPD), and 11767 to 11795 (TEPEEASADALQKPTKDKTPKQKKTLETP). Over residues 7774-7783 (KTAESSKELP) the composition is skewed to basic and acidic residues. Composition is skewed to acidic residues over residues 9429-9440 (VPYEEEKPEEIQ), 9500-9510 (VPYEEEKPEEI), 9571-9582 (VPYEEEKPEEIQ), 9642-9652 (VPYEEEKPEEI), 9713-9724 (VPYEEEKPEEIQ), 9784-9796 (VPYEEEKPEEIQE), 9855-9865 (VPYEEEKPEEI), 9926-9937 (VPYEEEKPEEIQ), 9997-10008 (VPYEEEKPEEIQ), 10068-10080 (VPYEEEKPEEIQE), 10139-10149 (VPYEEEKPEEI), 10210-10220 (VPYEEEKPEEI), 10281-10291 (VPYEEEKPEEI), 10352-10364 (VPYEEEKPEEIQE), 10423-10433 (VPYEEEKPEEI), 10494-10504 (VPYEEEKPEEI), 10565-10576 (VPYEEEKPEEIQ), 10636-10648 (VPYEEEKPEEIQE), 10707-10717 (VPYEEEKPEEI), 10778-10788 (VPYEEEKPEEI), 10849-10860 (VPYEEEKPEEIQ), 10920-10932 (VPYEEEKPEEIQE), 11062-11073 (VPYEEEKPEEIQ), 11133-11143 (VPYEEEKPEEI), 11204-11216 (VPYEEEKPEEIQE), and 11275-11286 (VPYEEEKPEEIQ). The span at 11686–11699 (KPKKKTTKTRTFKK) shows a compositional bias: basic residues. The span at 11780 to 11792 (PTKDKTPKQKKTL) shows a compositional bias: basic and acidic residues. A TPR 4 repeat occupies 11872–11905 (KTVLQPYQRTEMELPQRARRDSSFKQPVKLTPMK). Disordered stretches follow at residues 12003–12201 (FKHS…ADTK), 12451–12471 (TLQVGVTEHEPTKKLKTKKPE), 12685–12767 (TVDD…LPGP), 12943–12971 (IDHENAEEAPKVLKSKVSEEKPKSKKEKS), 13131–13154 (IKKKKVSPKHGPKEQVFEITETRP), 13325–13349 (QSFESPEPTEGEAHETKTKTKKPKK), 13471–13492 (EEYEPTEMDSKKKPKKKVKSHN), 13554–13576 (EADKPIKQPTQDQPIKKEKPLKK), 13702–13792 (KVQK…KSPD), 13891–13914 (EEVQEKSKEAPEEKKAKTVRKAKK), 13951–13994 (MKRK…DEPK), 14073–14094 (TTVPTETPDQDQPSVKQKRTKK), 14109–14322 (EEEA…QVTT), 14354–14377 (EYEPEPVNQDEKPKEPKKKTRKVK), 14414–14448 (PLDSPIDVLDESPKEVQKKDKKSRSTKVPNEETPV), 14533–14566 (EPEIASPQSIEEHPEQSKEKLAPKPKKTVRKVKK), 14583–14720 (KVDL…SELP), and 14756–14789 (VEESQPIVEEVEDEEPQPATEETVEDVTKPKSKK). Basic and acidic residues-rich tracts occupy residues 12022–12035 (ESDHSDKSNKELLH), 12044–12054 (EKIETPDESRK), 12124–12134 (MERTSDIREES), 12183–12201 (LNLRKRQGERPDDDKADTK), 12457–12471 (TEHEPTKKLKTKKPE), and 12685–12709 (TVDDVRVPKDKKKKIDNQKKIKISE). The span at 12731–12741 (HDEDLQTDEYS) shows a compositional bias: acidic residues. The span at 12750-12760 (KSKKKSTKKQK) shows a compositional bias: basic residues. The span at 13141–13154 (GPKEQVFEITETRP) shows a compositional bias: basic and acidic residues. Basic residues predominate over residues 13482–13492 (KKPKKKVKSHN). The stretch at 13566–13599 (QPIKKEKPLKKKKDVEYPVSLEAFDHTVKVVSEP) is one TPR 5 repeat. The segment covering 13733–13747 (LVKEDLDQPIERALE) has biased composition (basic and acidic residues). Residues 13771–13781 (PKPKKISKPKS) show a composition bias toward basic residues. Composition is skewed to basic and acidic residues over residues 13893-13906 (VQEKSKEAPEEKKA) and 13975-13984 (EDKPVEKISE). The span at 14221–14240 (TVEKPLEALHTDSDLEKPDV) shows a compositional bias: basic and acidic residues. Residues 14264–14274 (KISSEQPKQPS) are compositionally biased toward low complexity. A compositionally biased stretch (basic and acidic residues) spans 14282-14294 (VTEHDLKPEEEKP). A compositionally biased stretch (basic and acidic residues) spans 14542–14554 (IEEHPEQSKEKLA). A compositionally biased stretch (basic residues) spans 14555–14564 (PKPKKTVRKV). Basic and acidic residues predominate over residues 14583–14599 (KVDLEKYEKVEMPEKPV). Low complexity predominate over residues 14652–14662 (ETTVDTTDIPE). Positions 14664–14683 (TPTQTAQPEDTATAQITPSA) are enriched in polar residues. Basic and acidic residues predominate over residues 14684–14697 (QEEKSTQDDTKDTI). Residues 14756-14771 (VEESQPIVEEVEDEEP) show a composition bias toward acidic residues. The TPR 6 repeat unit spans residues 14904 to 14936 (IPKTTDIGAIKDNGELSRNIEEAEEILKFKPHK). 8 disordered regions span residues 14956–15208 (EKYI…VSVK), 15301–15329 (TRKKKPKPQQPEEFEVTLKEPKEEQIQPD), 15425–15448 (ISETQSIEEKPIEVAEEAPEETPK), 15578–15597 (IRVSESEPKPEEPSVEQFTV), 15697–15722 (EKPAEAIVEEEEPVVTEPIEEAPKPE), 15825–15876 (EEPK…VEEP), 15951–15973 (ESQPEAVEDKEVSLPKKKPKAPI), and 16181–16206 (QEEEYEEGEDIEEFVVSQQRKPKPLQ). Basic and acidic residues-rich tracts occupy residues 14967 to 14989 (EKTPYKKPEKAPKPEEKQEDVKL), 15024 to 15046 (ELKQKPKEVEIVEEQTKKPKDGE), 15069 to 15080 (QIEHPEIPEKVK), 15088 to 15097 (KPKDKSKSEP), 15109 to 15139 (PKEEEAIPEQDVKFRKPERDAPEETDSEIKL), 15169 to 15179 (IEDKAIDDEKK), 15189 to 15198 (QPKEQEIAKE), 15316 to 15325 (VTLKEPKEEQ), 15425 to 15437 (ISETQSIEEKPIE), and 15578 to 15589 (IRVSESEPKPEE). The segment covering 15703–15716 (IVEEEEPVVTEPIE) has biased composition (acidic residues). Over residues 15951-15964 (ESQPEAVEDKEVSL) the composition is skewed to basic and acidic residues. Positions 16183-16193 (EEYEEGEDIEE) are enriched in acidic residues. The region spanning 16409–16470 (ENLNIMYSIC…PAQYLMEPEE (62 aa)) is the SH3 domain. Ig-like domains lie at 16501 to 16590 (PRFI…TELI), 16625 to 16719 (PTFS…ITLK), 16728 to 16811 (PQIL…ANLT), 16822 to 16916 (PPLF…VEVD), 16919 to 17001 (TFTK…STVE), 17007 to 17091 (PDFI…CELV), 17097 to 17180 (PEIV…AKLT), 17184 to 17270 (PLVD…TKLC), and 17277 to 17363 (PPVI…AEAS). Cys-16940 and Cys-16989 are joined by a disulfide. Residues 17374 to 17467 (APGTPQPLEI…LSPPIRLVPK (94 aa)) enclose the Fibronectin type-III 1 domain. 2 Ig-like domains span residues 17473–17558 (PSVQ…CRLK) and 17563–17653 (PVLE…CTVQ). Cys-17494 and Cys-17542 are joined by a disulfide. Fibronectin type-III domains follow at residues 17660 to 17755 (RPQS…TKKF), 17760 to 17861 (PPRG…TPPS), 17862 to 17958 (PPQN…THAS), and 17982 to 18078 (PPTG…AMTA). A TPR 7 repeat occupies 17694–17728 (LEKCDVQNNVWMKVSDFNKDIKSYAVQKLSMNAQY). The disordered stretch occupies residues 17741–17771 (SEPTESDPVTITKKFEKPSPPRGPTTVSGMN).

Belongs to the protein kinase superfamily. CAMK Ser/Thr protein kinase family. As to quaternary structure, interacts with Msp300; this interaction mediates the recruitment of Msp300 to the Z-disks. In terms of tissue distribution, expressed in the mesoderm at stage 11, several hours before myoblast fusion, and persists in most muscle cells, somatic, visceral and pharyngeal muscles and their precursors, until the third instar. Isoform A: Expressed in the indirect flight muscle (at protein level).

It is found in the cytoplasm. It localises to the nucleus. Its subcellular location is the chromosome. The protein resides in the myofibril. The protein localises to the sarcomere. It is found in the z line. In terms of biological role, key component in the assembly and functioning of adult and embryonic striated muscles and muscle tendons. By providing connections at the level of individual microfilaments, it contributes to the fine balance of forces between the two halves of the sarcomere. The size and extensibility of the cross-links are the main determinants of sarcomere extensibility properties of muscle. In non-muscle cells, seems to play a role in chromosome condensation and chromosome segregation during mitosis. Might link the lamina network to chromatin or nuclear actin, or both during interphase. This Drosophila melanogaster (Fruit fly) protein is Titin (sls).